Here is a 282-residue protein sequence, read N- to C-terminus: Cell cycle checkpoint protein RAD1 (282 aa).

This sequence belongs to the rad1 family. As to quaternary structure, component of the toroidal 9-1-1 (RAD9-RAD1-HUS1) complex, composed of RAD9A, RAD1 and HUS1. The 9-1-1 complex associates with LIG1, POLB, FEN1, RAD17, HDAC1, RPA1 and RPA2. The 9-1-1 complex associates with the RAD17-RFC complex. RAD1 interacts with POLB, FEN1, HUS1, HUS1B, RAD9A and RAD9B. Interacts with DNAJC7. Interacts with RHNO1; interaction is direct. In terms of tissue distribution, expressed in testis, uterus, bladder, spleen, ovaries, lung, brain and muscle (at protein level).

The protein localises to the nucleus. Component of the 9-1-1 cell-cycle checkpoint response complex that plays a major role in DNA repair. The 9-1-1 complex is recruited to DNA lesion upon damage by the RAD17-replication factor C (RFC) clamp loader complex. Acts then as a sliding clamp platform on DNA for several proteins involved in long-patch base excision repair (LP-BER). The 9-1-1 complex stimulates DNA polymerase beta (POLB) activity by increasing its affinity for the 3'-OH end of the primer-template and stabilizes POLB to those sites where LP-BER proceeds; endonuclease FEN1 cleavage activity on substrates with double, nick, or gap flaps of distinct sequences and lengths; and DNA ligase I (LIG1) on long-patch base excision repair substrates. The 9-1-1 complex is necessary for the recruitment of RHNO1 to sites of double-stranded breaks (DSB) occurring during the S phase. In Homo sapiens (Human), this protein is Cell cycle checkpoint protein RAD1 (RAD1).